The following is a 154-amino-acid chain: Protein X (154 aa).

A mitochondrial targeting sequence region spans residues 68 to 117 (PCALRFTSARRMETTVNAHWNLPKVLHKRTLGLSAMSTTDLEAYFKDCVF).

Belongs to the orthohepadnavirus protein X family. In terms of assembly, may form homodimer. May interact with host CEBPA, CFLAR, CREB1, DDB1, E4F1, HBXIP, HSPD1/HSP60, NFKBIA, POLR2E and SMAD4. Interacts with host SMC5-SMC6 complex and induces its degradation. Interacts with host TRPC4AP; leading to prevent ubiquitination of TRPC4AP. Interacts with host PLSCR1; this interaction promotes ubiquitination and degradation of HBx and impairs HBx-mediated cell proliferation. Post-translationally, a fraction may be phosphorylated in insect cells and HepG2 cells, a human hepatoblastoma cell line. Phosphorylated in vitro by host protein kinase C or mitogen-activated protein kinase. N-acetylated in insect cells.

Its subcellular location is the host cytoplasm. The protein resides in the host nucleus. It is found in the host mitochondrion. Functionally, multifunctional protein that plays a role in silencing host antiviral defenses and promoting viral transcription. Does not seem to be essential for HBV infection. May be directly involved in development of cirrhosis and liver cancer (hepatocellular carcinoma). Most of cytosolic activities involve modulation of cytosolic calcium. The effect on apoptosis is controversial depending on the cell types in which the studies have been conducted. May induce apoptosis by localizing in mitochondria and causing loss of mitochondrial membrane potential. May also modulate apoptosis by binding host CFLAR, a key regulator of the death-inducing signaling complex (DISC). Promotes viral transcription by using the host E3 ubiquitin ligase DDB1 to target the SMC5-SMC6 complex to proteasomal degradation. This host complex would otherwise bind to viral episomal DNA, and prevents its transcription. Moderately stimulates transcription of many different viral and cellular transcription elements. Promoters and enhancers stimulated by HBx contain DNA binding sites for NF-kappa-B, AP-1, AP-2, c-EBP, ATF/CREB, or the calcium-activated factor NF-AT. The chain is Protein X from Hepatitis B virus genotype B2 (isolate Vietnam/9873/1997) (HBV-B).